A 226-amino-acid chain; its full sequence is Cytidylate kinase (226 aa).

11 to 19 (GPAAAGKST) lines the ATP pocket.

The protein belongs to the cytidylate kinase family. Type 1 subfamily.

It localises to the cytoplasm. It catalyses the reaction CMP + ATP = CDP + ADP. The catalysed reaction is dCMP + ATP = dCDP + ADP. The polypeptide is Cytidylate kinase (Bacillus licheniformis (strain ATCC 14580 / DSM 13 / JCM 2505 / CCUG 7422 / NBRC 12200 / NCIMB 9375 / NCTC 10341 / NRRL NRS-1264 / Gibson 46)).